The primary structure comprises 147 residues: Lysozyme C (147 aa).

An N-terminal signal peptide occupies residues 1–18 (MRSLLILVLCFLPLAALG). The C-type lysozyme domain occupies 19–147 (KVFGRCELAA…VQAWIRGCRL (129 aa)). 4 cysteine pairs are disulfide-bonded: Cys-24-Cys-145, Cys-48-Cys-133, Cys-82-Cys-98, and Cys-94-Cys-112. Catalysis depends on residues Glu-53 and Asp-70. Asp-119 contributes to the substrate binding site.

It belongs to the glycosyl hydrolase 22 family. As to quaternary structure, monomer. In terms of tissue distribution, in the egg white and polymorphonuclear leukocytes.

The protein resides in the secreted. It catalyses the reaction Hydrolysis of (1-&gt;4)-beta-linkages between N-acetylmuramic acid and N-acetyl-D-glucosamine residues in a peptidoglycan and between N-acetyl-D-glucosamine residues in chitodextrins.. Functionally, lysozymes have primarily a bacteriolytic function; those in tissues and body fluids are associated with the monocyte-macrophage system and enhance the activity of immunoagents. Has bacteriolytic activity against M.luteus. This is Lysozyme C (LYZ) from Gallus gallus (Chicken).